The chain runs to 482 residues: Membrane-bound lytic murein transglycosylase F (482 aa).

Positions 1–13 (MKGLFLRIITALA) are cleaved as a signal peptide. Residues 14 to 267 (LLFWAIDMVF…NLKEKYLGHI (254 aa)) form a non-LT domain region. Positions 268–482 (SQFDYVDTRS…NLEEIKENKD (215 aa)) are LT domain. Glu312 is an active-site residue.

In the N-terminal section; belongs to the bacterial solute-binding protein 3 family. The protein in the C-terminal section; belongs to the transglycosylase Slt family.

The protein resides in the cell outer membrane. It carries out the reaction Exolytic cleavage of the (1-&gt;4)-beta-glycosidic linkage between N-acetylmuramic acid (MurNAc) and N-acetylglucosamine (GlcNAc) residues in peptidoglycan, from either the reducing or the non-reducing ends of the peptidoglycan chains, with concomitant formation of a 1,6-anhydrobond in the MurNAc residue.. Murein-degrading enzyme that degrades murein glycan strands and insoluble, high-molecular weight murein sacculi, with the concomitant formation of a 1,6-anhydromuramoyl product. Lytic transglycosylases (LTs) play an integral role in the metabolism of the peptidoglycan (PG) sacculus. Their lytic action creates space within the PG sacculus to allow for its expansion as well as for the insertion of various structures such as secretion systems and flagella. This Haemophilus influenzae (strain PittEE) protein is Membrane-bound lytic murein transglycosylase F.